Here is a 612-residue protein sequence, read N- to C-terminus: DEAD-box ATP-dependent RNA helicase 11 (612 aa).

2 disordered regions span residues M1–G70 and G83–R104. N-acetylserine is present on S2. Gly residues-rich tracts occupy residues S61 to G70 and G83 to W94. The Q motif motif lies at N151–R179. The Helicase ATP-binding domain occupies I182–L366. Residue A195–T202 participates in ATP binding. Positions D310–D313 match the DEAD box motif. Positions L377–A542 constitute a Helicase C-terminal domain. The segment at F547–D583 is disordered. Residues G559–S568 show a composition bias toward basic and acidic residues. Over residues S570 to D583 the composition is skewed to gly residues.

The protein belongs to the DEAD box helicase family. DDX3/DED1 subfamily.

It catalyses the reaction ATP + H2O = ADP + phosphate + H(+). In Arabidopsis thaliana (Mouse-ear cress), this protein is DEAD-box ATP-dependent RNA helicase 11 (RH11).